Here is a 131-residue protein sequence, read N- to C-terminus: Insulin-like 3 (131 aa).

A signal peptide spans 1-26; sequence MDPHPLTWALVLLGPALALSRAPAPA. 3 disulfide bridges follow: Cys-34–Cys-116, Cys-46–Cys-129, and Cys-115–Cys-120. Residues 58–103 constitute a propeptide, c peptide like; the sequence is AVAGGDRELLQWLEGQHLFHGLMASGDPMLVLAPQPPPQASGHHHH.

Belongs to the insulin family. As to quaternary structure, heterodimer of a B chain and an A chain linked by two disulfide bonds. Expressed exclusively in prenatal and postnatal Leydig cells.

It localises to the secreted. Its function is as follows. Seems to play a role in testicular function. May be a trophic hormone with a role in testicular descent in fetal life. Is a ligand for LGR8 receptor. This chain is Insulin-like 3 (INSL3), found in Sus scrofa (Pig).